A 157-amino-acid chain; its full sequence is Snaclec EMS16 subunit alpha (157 aa).

The N-terminal stretch at 1-23 (MGRFISVSFGLLVVFLSLSGTGA) is a signal peptide. Cystine bridges form between cysteine 27/cysteine 38, cysteine 55/cysteine 152, and cysteine 127/cysteine 144. Residues 34 to 153 (YDQHCYLAIG…CEDLYPFVCK (120 aa)) form the C-type lectin domain.

Belongs to the snaclec family. In terms of assembly, heterodimer of subunits A and B; disulfide-linked. As to expression, expressed by the venom gland.

It is found in the secreted. EMS16 is a potent and selective inhibitor of alpha-2/beta-1 (ITGA2/ITGB1) integrin and acts as a potent antagonist of platelet aggregation and cell migration. Binds specifically to the I domain of the alpha-2 subunit, in a metal ion-independent fashion. This chain is Snaclec EMS16 subunit alpha, found in Echis multisquamatus (Central Asian sand viper).